We begin with the raw amino-acid sequence, 69 residues long: Small ribosomal subunit protein bS21 (69 aa).

Belongs to the bacterial ribosomal protein bS21 family.

The protein is Small ribosomal subunit protein bS21 of Hyphomonas neptunium (strain ATCC 15444).